Here is a 74-residue protein sequence, read N- to C-terminus: UPF0291 protein EF_0064 (74 aa).

A disordered region spans residues Tyr53–Asp74. Basic and acidic residues predominate over residues Thr61–Asp74.

The protein belongs to the UPF0291 family.

The protein resides in the cytoplasm. The protein is UPF0291 protein EF_0064 of Enterococcus faecalis (strain ATCC 700802 / V583).